Consider the following 779-residue polypeptide: 3-isopropylmalate dehydratase (779 aa).

[4Fe-4S] cluster is bound by residues C360, C421, and C424. The tract at residues 484 to 518 (QDQSSPKVEVTSEDEKELESAAYDHAEPVQPEDAP) is disordered. A Phosphoserine modification is found at S488. The residue at position 494 (T494) is a Phosphothreonine. S495 carries the phosphoserine modification. A compositionally biased stretch (basic and acidic residues) spans 501-510 (LESAAYDHAE).

Belongs to the aconitase/IPM isomerase family. In terms of assembly, monomer. [4Fe-4S] cluster is required as a cofactor.

It catalyses the reaction (2R,3S)-3-isopropylmalate = (2S)-2-isopropylmalate. It functions in the pathway amino-acid biosynthesis; L-leucine biosynthesis; L-leucine from 3-methyl-2-oxobutanoate: step 2/4. Functionally, catalyzes the isomerization between 2-isopropylmalate and 3-isopropylmalate, via the formation of 2-isopropylmaleate. This Saccharomyces cerevisiae (strain ATCC 204508 / S288c) (Baker's yeast) protein is 3-isopropylmalate dehydratase (LEU1).